Reading from the N-terminus, the 950-residue chain is Glycine dehydrogenase (decarboxylating) (950 aa).

Residue K699 is modified to N6-(pyridoxal phosphate)lysine.

The protein belongs to the GcvP family. The glycine cleavage system is composed of four proteins: P, T, L and H. Pyridoxal 5'-phosphate is required as a cofactor.

It catalyses the reaction N(6)-[(R)-lipoyl]-L-lysyl-[glycine-cleavage complex H protein] + glycine + H(+) = N(6)-[(R)-S(8)-aminomethyldihydrolipoyl]-L-lysyl-[glycine-cleavage complex H protein] + CO2. Functionally, the glycine cleavage system catalyzes the degradation of glycine. The P protein binds the alpha-amino group of glycine through its pyridoxal phosphate cofactor; CO(2) is released and the remaining methylamine moiety is then transferred to the lipoamide cofactor of the H protein. This Chromobacterium violaceum (strain ATCC 12472 / DSM 30191 / JCM 1249 / CCUG 213 / NBRC 12614 / NCIMB 9131 / NCTC 9757 / MK) protein is Glycine dehydrogenase (decarboxylating).